The primary structure comprises 214 residues: uncharacterized protein (214 aa).

4 helical membrane-spanning segments follow: residues 43-63 (IQKPNVIIMYISVLVLFAAHI), 84-104 (IEWAKSNFFRICGALVFIPVI), 116-136 (ALVIFVFLMGFPQRSIMEYFI), and 150-170 (PVTRIFIIGAAVFSCVMFGIF).

The protein localises to the host membrane. This is an uncharacterized protein from Citrus leprosis virus C (isolate Citrus sinesis/Brazil/Cordeiropolis/2003) (CiLV-C).